The primary structure comprises 509 residues: Light-independent protochlorophyllide reductase subunit B (509 aa).

Position 36 (Asp-36) interacts with [4Fe-4S] cluster. The active-site Proton donor is Asp-298. 433 to 434 (GM) contributes to the substrate binding site.

It belongs to the ChlB/BchB/BchZ family. As to quaternary structure, protochlorophyllide reductase is composed of three subunits; ChlL, ChlN and ChlB. Forms a heterotetramer of two ChlB and two ChlN subunits. [4Fe-4S] cluster serves as cofactor.

Its subcellular location is the plastid. The protein resides in the chloroplast. The catalysed reaction is chlorophyllide a + oxidized 2[4Fe-4S]-[ferredoxin] + 2 ADP + 2 phosphate = protochlorophyllide a + reduced 2[4Fe-4S]-[ferredoxin] + 2 ATP + 2 H2O. Its pathway is porphyrin-containing compound metabolism; chlorophyll biosynthesis (light-independent). Component of the dark-operative protochlorophyllide reductase (DPOR) that uses Mg-ATP and reduced ferredoxin to reduce ring D of protochlorophyllide (Pchlide) to form chlorophyllide a (Chlide). This reaction is light-independent. The NB-protein (ChlN-ChlB) is the catalytic component of the complex. This chain is Light-independent protochlorophyllide reductase subunit B, found in Ephedra altissima (High-climbing jointfir).